Here is a 379-residue protein sequence, read N- to C-terminus: Probable G-protein coupled receptor 27 (379 aa).

At M1–A26 the chain is on the extracellular side. N3 carries an N-linked (GlcNAc...) asparagine glycan. The helical transmembrane segment at T27–V47 threads the bilayer. Residues R48–Y58 are Cytoplasmic-facing. The helical transmembrane segment at L59–M79 threads the bilayer. Over L80 to L100 the chain is Extracellular. C98 and C175 are oxidised to a cystine. Residues L101–V121 traverse the membrane as a helical segment. Residues T122 to C142 lie on the Cytoplasmic side of the membrane. Residues A143–L163 traverse the membrane as a helical segment. At D164–P185 the chain is on the extracellular side. The chain crosses the membrane as a helical span at residues G186–L206. The Cytoplasmic portion of the chain corresponds to R207 to M289. A helical membrane pass occupies residues F290 to L310. The Extracellular portion of the chain corresponds to R311–L324. Residues T325 to F345 traverse the membrane as a helical segment. Residues N346 to L379 lie on the Cytoplasmic side of the membrane.

This sequence belongs to the G-protein coupled receptor 1 family.

It is found in the cell membrane. Functionally, orphan receptor. Possible candidate for amine-like G-protein coupled receptor. This chain is Probable G-protein coupled receptor 27 (Gpr27), found in Mus musculus (Mouse).